Consider the following 281-residue polypeptide: 1-acyl-sn-glycerol-3-phosphate acyltransferase (281 aa).

The next 3 membrane-spanning stretches (helical) occupy residues 40–60 (IFVC…IMVL), 71–91 (LGNL…GIPI), and 110–130 (ASPI…VGVA). The short motif at 109–114 (HASPID) is the HXXXXD motif element.

It belongs to the 1-acyl-sn-glycerol-3-phosphate acyltransferase family.

The protein resides in the membrane. The enzyme catalyses a 1-acyl-sn-glycero-3-phosphate + an acyl-CoA = a 1,2-diacyl-sn-glycero-3-phosphate + CoA. The protein operates within phospholipid metabolism; CDP-diacylglycerol biosynthesis; CDP-diacylglycerol from sn-glycerol 3-phosphate: step 2/3. Converts lysophosphatidic acid (LPA) into phosphatidic acid by incorporating acyl moiety at the 2 position. This enzyme uses erucoyl-CoA as an acyl donor. This Limnanthes alba (White meadowfoam) protein is 1-acyl-sn-glycerol-3-phosphate acyltransferase.